The following is a 464-amino-acid chain: Putative guanine nucleotide-binding protein subunit alpha (464 aa).

In terms of domain architecture, G-alpha spans 33-415 (HSKLKRGDGP…ETKRDKYNEK (383 aa)). The interval 36 to 49 (LKRGDGPGESGKST) is G1 motif. GTP-binding positions include 41–48 (GPGESGKS), 147–151 (DVGGQ), 214–220 (LRSRTKT), 239–243 (DVGGQ), 268–271 (RNRD), and 310–313 (TSQS). Ser48 lines the Mg(2+) pocket. A G2 motif region spans residues 212–220 (DVLRSRTKT). A Mg(2+)-binding site is contributed by Thr220. A G3 motif region spans residues 235–244 (FRMVDVGGQR). The tract at residues 306 to 313 (VMFLTSQS) is G4 motif. The interval 382–387 (GYSGTC) is G5 motif.

The protein in the N-terminal section; belongs to the G-alpha family. This sequence in the C-terminal section; belongs to the class-II aminoacyl-tRNA synthetase family. G proteins are composed of 3 units; alpha, beta and gamma. The alpha chain contains the guanine nucleotide binding site.

Guanine nucleotide-binding proteins (G proteins) are involved as modulators or transducers in various transmembrane signaling systems. This is Putative guanine nucleotide-binding protein subunit alpha from Leishmania donovani.